A 245-amino-acid chain; its full sequence is DNA polymerase sliding clamp (245 aa).

The protein belongs to the PCNA family. Homotrimer. The subunits circularize to form a toroid; DNA passes through its center. Replication factor C (RFC) is required to load the toroid on the DNA.

Functionally, sliding clamp subunit that acts as a moving platform for DNA processing. Responsible for tethering the catalytic subunit of DNA polymerase and other proteins to DNA during high-speed replication. The sequence is that of DNA polymerase sliding clamp from Archaeoglobus fulgidus (strain ATCC 49558 / DSM 4304 / JCM 9628 / NBRC 100126 / VC-16).